The primary structure comprises 64 residues: UPF0434 protein Bmul_0750/BMULJ_02510 (64 aa).

Belongs to the UPF0434 family.

This chain is UPF0434 protein Bmul_0750/BMULJ_02510, found in Burkholderia multivorans (strain ATCC 17616 / 249).